The sequence spans 382 residues: Mannitol-1-phosphate 5-dehydrogenase (382 aa).

4 to 15 contacts NAD(+); the sequence is AVHFGAGNIGRG.

Belongs to the mannitol dehydrogenase family.

The catalysed reaction is D-mannitol 1-phosphate + NAD(+) = beta-D-fructose 6-phosphate + NADH + H(+). This is Mannitol-1-phosphate 5-dehydrogenase from Vibrio campbellii (strain ATCC BAA-1116).